The following is a 450-amino-acid chain: Eukaryotic translation initiation factor 3 subunit E (450 aa).

Residues 255–424 enclose the PCI domain; it reads TELFFSPAYI…GTVIMNHPPQ (170 aa).

Belongs to the eIF-3 subunit E family. Component of the eukaryotic translation initiation factor 3 (eIF-3) complex.

The protein localises to the cytoplasm. Functionally, component of the eukaryotic translation initiation factor 3 (eIF-3) complex, which is involved in protein synthesis of a specialized repertoire of mRNAs and, together with other initiation factors, stimulates binding of mRNA and methionyl-tRNAi to the 40S ribosome. The eIF-3 complex specifically targets and initiates translation of a subset of mRNAs involved in cell proliferation. This Aspergillus clavatus (strain ATCC 1007 / CBS 513.65 / DSM 816 / NCTC 3887 / NRRL 1 / QM 1276 / 107) protein is Eukaryotic translation initiation factor 3 subunit E (int6).